The sequence spans 45 residues: Large ribosomal subunit protein bL34 (45 aa).

The interval 23 to 45 (ETPGGKKVLSARRAKGRKNLIAK) is disordered. Over residues 31-45 (LSARRAKGRKNLIAK) the composition is skewed to basic residues.

Belongs to the bacterial ribosomal protein bL34 family.

This Elusimicrobium minutum (strain Pei191) protein is Large ribosomal subunit protein bL34.